A 281-amino-acid chain; its full sequence is Nucleotide-binding protein Patl_0571 (281 aa).

8 to 15 (GRSGSGKS) is a binding site for ATP. 56-59 (DVRN) serves as a coordination point for GTP.

Belongs to the RapZ-like family.

Displays ATPase and GTPase activities. This is Nucleotide-binding protein Patl_0571 from Pseudoalteromonas atlantica (strain T6c / ATCC BAA-1087).